The chain runs to 226 residues: Probable septum site-determining protein MinC (226 aa).

Belongs to the MinC family. In terms of assembly, interacts with MinD and FtsZ.

Its function is as follows. Cell division inhibitor that blocks the formation of polar Z ring septums. Rapidly oscillates between the poles of the cell to destabilize FtsZ filaments that have formed before they mature into polar Z rings. Prevents FtsZ polymerization. The sequence is that of Probable septum site-determining protein MinC from Edwardsiella ictaluri (strain 93-146).